The sequence spans 334 residues: Small ribosomal subunit protein uS2 (334 aa).

Belongs to the universal ribosomal protein uS2 family.

The polypeptide is Small ribosomal subunit protein uS2 (Xanthobacter autotrophicus (strain ATCC BAA-1158 / Py2)).